The sequence spans 321 residues: NADPH-dependent codeinone reductase 1-3 (321 aa).

NADPH is bound by residues Thr-27 and Asp-51. Active-site proton donor residues include Tyr-56 and His-119. A substrate-binding site is contributed by His-119. The NADPH site is built by Gln-187, Ser-214, Leu-216, Ser-264, and Arg-269. Residues 300-321 (ADFLLSPTGPFKTEEEFWDEKD) are disordered.

This sequence belongs to the aldo/keto reductase family. Latex secreting cells (laticifer cells). Expressed constitutively in all organs with highest levels in capsules. Restricted to the parietal region of sieve elements adjacent or proximal to laticifers in roots, stems, leaves and carpels.

It localises to the cytoplasm. The protein resides in the cytosol. It carries out the reaction codeine + NADP(+) = codeinone + NADPH + H(+). It catalyses the reaction neopine + NADP(+) = neopinone + NADPH + H(+). The enzyme catalyses morphine + NADP(+) = morphinone + NADPH + H(+). The catalysed reaction is neomorphine + NADP(+) = neomorphinone + NADPH + H(+). The protein operates within alkaloid biosynthesis; morphine biosynthesis. Its function is as follows. NADPH-dependent codeinone reductase involved in biosynthesis of morphinan-type benzylisoquinoline and opiate alkaloids natural products. Reduces codeinone to codeine in the penultimate step in morphine biosynthesis. Can use morphinone, hydrocodone and hydromorphone as substrate during reductive reaction with NADPH as cofactor, and morphine and dihydrocodeine as substrate during oxidative reaction with NADP as cofactor. Converts morphinone to morphine, and neomorphinone to neomorphine. Reduces irreversibly neopinone, a spontaneous isomer of codeinone, to neopine; in planta, neopine levels are limited to low levels. The chain is NADPH-dependent codeinone reductase 1-3 from Papaver somniferum (Opium poppy).